A 261-amino-acid polypeptide reads, in one-letter code: Imidazole glycerol phosphate synthase subunit HisF (261 aa).

Catalysis depends on residues Asp16 and Asp135.

This sequence belongs to the HisA/HisF family. Heterodimer of HisH and HisF.

The protein localises to the cytoplasm. The catalysed reaction is 5-[(5-phospho-1-deoxy-D-ribulos-1-ylimino)methylamino]-1-(5-phospho-beta-D-ribosyl)imidazole-4-carboxamide + L-glutamine = D-erythro-1-(imidazol-4-yl)glycerol 3-phosphate + 5-amino-1-(5-phospho-beta-D-ribosyl)imidazole-4-carboxamide + L-glutamate + H(+). It functions in the pathway amino-acid biosynthesis; L-histidine biosynthesis; L-histidine from 5-phospho-alpha-D-ribose 1-diphosphate: step 5/9. Functionally, IGPS catalyzes the conversion of PRFAR and glutamine to IGP, AICAR and glutamate. The HisF subunit catalyzes the cyclization activity that produces IGP and AICAR from PRFAR using the ammonia provided by the HisH subunit. This is Imidazole glycerol phosphate synthase subunit HisF from Mycolicibacterium vanbaalenii (strain DSM 7251 / JCM 13017 / BCRC 16820 / KCTC 9966 / NRRL B-24157 / PYR-1) (Mycobacterium vanbaalenii).